The chain runs to 1069 residues: Protocadherin-8 (1069 aa).

Residues 1-29 (MSPVKRWGSPCLFPLQLFSLCWVLSVAQS) form the signal peptide. Cadherin domains lie at 30-135 (KTVR…APRF), 136-245 (PRAQ…SPAF), 247-354 (QGAV…APDI), 393-497 (QETG…APLF), 498-609 (TKPV…SPVL), and 615-721 (ANGS…VPAS). Topologically, residues 30–747 (KTVRYSTFEE…SGPSLQWDTP (718 aa)) are extracellular. The N-linked (GlcNAc...) asparagine glycan is linked to Asn616. Residues 719–738 (PASAGSPEHFRPPGSRLAPS) are disordered. A helical membrane pass occupies residues 748–768 (LIVIIVLAGSCTLLLAAIIAI). Residues 769-1069 (ATTCNRRKKE…SPKKGTNENV (301 aa)) lie on the Cytoplasmic side of the membrane. Disordered regions lie at residues 777–859 (KEVR…TGES), 905–927 (REAEKFSGKDSGKGDSDFNDSDS), and 1031–1069 (LSPPRPGRLPDLQEIGVPLYESPPGGRYVSPKKGTNENV). 2 stretches are compositionally biased toward basic and acidic residues: residues 780 to 790 (RKGGALREERP) and 905 to 920 (REAEKFSGKDSGKGDS). Position 1052 is a phosphoserine (Ser1052).

The N-terminal extracellular domain forms homophilic interactions; these interactions activate p38 MAPK via TAOK2 and trigger endocytosis. Interacts with CDH2; this interaction may lead to CDH2 cointernalization. Interacts with CDH11. Interacts with TAOK2. Enriched in brain relative to peripheral tissues, with low expression in the testis. Expressed in hippocampal neurons (at protein level).

It is found in the cell membrane. The protein resides in the cell projection. The protein localises to the dendrite. It localises to the presynaptic cell membrane. Its subcellular location is the postsynaptic cell membrane. Calcium-dependent cell-adhesion protein. May play a role in activity-induced synaptic reorganization underlying long term memory. Could be involved in CDH2 internalization through TAOK2/p38 MAPK pathway. In hippocampal neurons, may play a role in the down-regulation of dendritic spines, maybe through its action on CDH2 endocytosis. The protein is Protocadherin-8 (Pcdh8) of Rattus norvegicus (Rat).